The primary structure comprises 147 residues: Hemoglobin subunit gamma-1 (147 aa).

The 145-residue stretch at Asn3–His147 folds into the Globin domain. Residue Thr13 is modified to Phosphothreonine. A phosphoserine mark is found at Ser45, Ser51, and Ser53. The residue at position 60 (Lys60) is an N6-acetyllysine. His64 contributes to the heme b binding site. Lys83 is modified (N6-acetyllysine). Heme b is bound at residue His93. S-nitrosocysteine is present on Cys94. Ser140 carries the post-translational modification Phosphoserine.

It belongs to the globin family. Heterotetramer of two alpha chains and two gamma chains in fetal hemoglobin (Hb F). As to expression, red blood cells.

In terms of biological role, gamma chains make up the fetal hemoglobin F, in combination with alpha chains. This Plecturocebus moloch (Dusky titi monkey) protein is Hemoglobin subunit gamma-1 (HBG1).